Reading from the N-terminus, the 22-residue chain is Cysteine-rich venom protein collettin-a (22 aa).

Over residues 1–15 the composition is skewed to basic and acidic residues; the sequence is SNKKNYQKEIVDKHN. Residues 1–22 form a disordered region; sequence SNKKNYQKEIVDKHNALRRSVK.

The protein belongs to the CRISP family. Post-translationally, contains 8 disulfide bonds. As to expression, expressed by the venom gland.

Its subcellular location is the secreted. This chain is Cysteine-rich venom protein collettin-a, found in Pseudechis colletti (Collett's snake).